A 406-amino-acid chain; its full sequence is (R)-benzylsuccinyl-CoA dehydrogenase (406 aa).

This sequence belongs to the acyl-CoA dehydrogenase family. In terms of assembly, homotetramer. The cofactor is FAD.

It carries out the reaction (R)-2-benzylsuccinyl-CoA + oxidized [electron-transfer flavoprotein] + H(+) = (E)-2-benzylidenesuccinyl-CoA + reduced [electron-transfer flavoprotein]. The protein operates within xenobiotic degradation; toluene degradation. With respect to regulation, inhibited by (S)-benzylsuccinyl-CoA. Its function is as follows. Catalyzes the oxidation of benzylsuccinyl-CoA to benzylidenesuccinyl-CoA. The sequence is that of (R)-benzylsuccinyl-CoA dehydrogenase (bbsG) from Thauera aromatica.